The primary structure comprises 349 residues: Ferredoxin--NADP reductase 1 (349 aa).

7 residues coordinate FAD: Glu-36, Lys-44, Tyr-48, Val-88, Leu-123, Asp-290, and Ser-331.

Belongs to the ferredoxin--NADP reductase type 2 family. As to quaternary structure, homodimer. Requires FAD as cofactor.

It carries out the reaction 2 reduced [2Fe-2S]-[ferredoxin] + NADP(+) + H(+) = 2 oxidized [2Fe-2S]-[ferredoxin] + NADPH. This is Ferredoxin--NADP reductase 1 from Bacillus cytotoxicus (strain DSM 22905 / CIP 110041 / 391-98 / NVH 391-98).